Consider the following 188-residue polypeptide: Elongation factor P (188 aa).

Residue K34 is modified to N6-(3,6-diaminohexanoyl)-5-hydroxylysine.

Belongs to the elongation factor P family. Post-translationally, may be beta-lysylated on the epsilon-amino group of Lys-34 by the combined action of EpmA and EpmB, and then hydroxylated on the C5 position of the same residue by EpmC (if this protein is present). Lysylation is critical for the stimulatory effect of EF-P on peptide-bond formation. The lysylation moiety may extend toward the peptidyltransferase center and stabilize the terminal 3-CCA end of the tRNA. Hydroxylation of the C5 position on Lys-34 may allow additional potential stabilizing hydrogen-bond interactions with the P-tRNA.

It is found in the cytoplasm. It participates in protein biosynthesis; polypeptide chain elongation. Its function is as follows. Involved in peptide bond synthesis. Alleviates ribosome stalling that occurs when 3 or more consecutive Pro residues or the sequence PPG is present in a protein, possibly by augmenting the peptidyl transferase activity of the ribosome. Modification of Lys-34 is required for alleviation. In Actinobacillus pleuropneumoniae serotype 5b (strain L20), this protein is Elongation factor P.